The chain runs to 162 residues: Ribosome maturation factor RimP (162 aa).

Belongs to the RimP family.

It is found in the cytoplasm. In terms of biological role, required for maturation of 30S ribosomal subunits. The chain is Ribosome maturation factor RimP from Ralstonia pickettii (strain 12J).